Consider the following 129-residue polypeptide: Glycine cleavage system H protein (129 aa).

A Lipoyl-binding domain is found at 24-106 (TVVVGVTSYA…YGDGWLIKVR (83 aa)). Position 65 is an N6-lipoyllysine (K65).

This sequence belongs to the GcvH family. As to quaternary structure, the glycine cleavage system is composed of four proteins: P, T, L and H. (R)-lipoate is required as a cofactor.

In terms of biological role, the glycine cleavage system catalyzes the degradation of glycine. The H protein shuttles the methylamine group of glycine from the P protein to the T protein. In Gloeobacter violaceus (strain ATCC 29082 / PCC 7421), this protein is Glycine cleavage system H protein.